The sequence spans 401 residues: Shugoshin (401 aa).

Residues 3 to 49 are a coiled coil; it reads SKVEQQYKLLNAELMDQVQKQRLEIGEYRKRVISLEREIMDIREEHV. The interval 82 to 197 is disordered; the sequence is EPAPAAQINR…VEETQTEQNE (116 aa). The span at 98–108 shows a compositional bias: basic and acidic residues; sequence SSREICKDMRR. The span at 114–137 shows a compositional bias: low complexity; the sequence is RTTRPISPRRSSSVTSTVSSTSRR. Residues serine 124, serine 125, and serine 126 each carry the phosphoserine; by AurB modification. Residues 171 to 183 show a composition bias toward acidic residues; the sequence is VFDEDDSDDDFDE. Threonine 331 bears the Phosphothreonine; by PLK1 mark. Positions 338–401 are disordered; that stretch reads EEMPSIRTRS…GSKGKAKAKK (64 aa). Over residues 348 to 377 the composition is skewed to polar residues; sequence RTAANKKSENTDMSSSFCNNSARPSRSCRP. The span at 387–401 shows a compositional bias: basic residues; it reads NKLRNGSKGKAKAKK.

The protein belongs to the shugoshin family. Homodimer. Interacts with Incenp. In terms of processing, phosphorylation by polo-like kinase (PLK) on Thr-331 antagonizes cohesive function. Phosphorylation on Thr-331 at the metaphase anaphase transition leads to its dissociation from centromeres. In contrast, phosphorylation by aurB/ial on either Ser-124, Ser-125 or Ser-126 is required for association with centromeres.

It localises to the chromosome. The protein localises to the centromere. In terms of biological role, plays a central role in chromosome cohesion during meiosis and mitosis by preventing premature dissociation of cohesin complex from centromeres after prophase, when most of cohesin complex dissociates from chromosomes arms. May act by protecting or Rad21 from cleavage by Sse/separase. Required during meiosis in both males and females. This Drosophila melanogaster (Fruit fly) protein is Shugoshin (mei-S332).